The following is a 182-amino-acid chain: Nascent polypeptide-associated complex subunit alpha (182 aa).

Residues 17 to 81 (NKNEKKAKEL…AKVDDMNQRI (65 aa)) form the NAC-A/B domain. A disordered region spans residues 120–148 (ASLQGGESNADAAEDDNEEVDETGINPKD). Residues 131-141 (AAEDDNEEVDE) are compositionally biased toward acidic residues. Residues 144-182 (INPKDIDLIVEQTRVSRGSAVKALKKHDGDMVNALMELS) enclose the UBA domain.

This sequence belongs to the NAC-alpha family. As to quaternary structure, part of the nascent polypeptide-associated complex (NAC), consisting of EGD2 and EGD1. NAC associates with ribosomes via EGD1.

Its subcellular location is the cytoplasm. The protein resides in the nucleus. Its function is as follows. Component of the nascent polypeptide-associated complex (NAC), a dynamic component of the ribosomal exit tunnel, protecting the emerging polypeptides from interaction with other cytoplasmic proteins to ensure appropriate nascent protein targeting. The NAC complex also promotes mitochondrial protein import by enhancing productive ribosome interactions with the outer mitochondrial membrane and blocks the inappropriate interaction of ribosomes translating non-secretory nascent polypeptides with translocation sites in the membrane of the endoplasmic reticulum. EGD2 may also be involved in transcription regulation. This is Nascent polypeptide-associated complex subunit alpha (EGD2) from Lodderomyces elongisporus (strain ATCC 11503 / CBS 2605 / JCM 1781 / NBRC 1676 / NRRL YB-4239) (Yeast).